A 163-amino-acid chain; its full sequence is Nucleotide-binding protein RHA1_ro01989 (163 aa).

The protein belongs to the YajQ family.

In terms of biological role, nucleotide-binding protein. The protein is Nucleotide-binding protein RHA1_ro01989 of Rhodococcus jostii (strain RHA1).